We begin with the raw amino-acid sequence, 526 residues long: Tyrosine-protein kinase transforming protein Src (526 aa).

Basic residues predominate over residues M1–R15. The segment at M1–K59 is disordered. G2 carries N-myristoyl glycine; by host lipidation. Basic and acidic residues predominate over residues R16–H25. The SH3 domain occupies G81–S142. Positions W148–C245 constitute an SH2 domain. The Protein kinase domain maps to L267 to L517. ATP is bound by residues L273–V281 and K295. D386 serves as the catalytic Proton acceptor. Y416 carries the post-translational modification Phosphotyrosine; by autocatalysis.

Belongs to the protein kinase superfamily. Tyr protein kinase family. SRC subfamily. As to quaternary structure, homodimer. In terms of processing, the phosphorylated form is termed pp60v-src.

It catalyses the reaction L-tyrosyl-[protein] + ATP = O-phospho-L-tyrosyl-[protein] + ADP + H(+). Functionally, this phosphoprotein, required for both the initiation and the maintenance of neoplastic transformation, is a protein kinase that catalyzes the phosphorylation of tyrosine residues in vitro. The polypeptide is Tyrosine-protein kinase transforming protein Src (V-SRC) (Rous sarcoma virus subgroup E (strain Schmidt-Ruppin) (RSV-SR-E)).